Here is a 250-residue protein sequence, read N- to C-terminus: Ubiquinone/menaquinone biosynthesis C-methyltransferase UbiE (250 aa).

S-adenosyl-L-methionine-binding positions include T73, D94, 122–123 (NA), and S139.

Belongs to the class I-like SAM-binding methyltransferase superfamily. MenG/UbiE family.

The catalysed reaction is a 2-demethylmenaquinol + S-adenosyl-L-methionine = a menaquinol + S-adenosyl-L-homocysteine + H(+). The enzyme catalyses a 2-methoxy-6-(all-trans-polyprenyl)benzene-1,4-diol + S-adenosyl-L-methionine = a 5-methoxy-2-methyl-3-(all-trans-polyprenyl)benzene-1,4-diol + S-adenosyl-L-homocysteine + H(+). The protein operates within quinol/quinone metabolism; menaquinone biosynthesis; menaquinol from 1,4-dihydroxy-2-naphthoate: step 2/2. It participates in cofactor biosynthesis; ubiquinone biosynthesis. Methyltransferase required for the conversion of demethylmenaquinol (DMKH2) to menaquinol (MKH2) and the conversion of 2-polyprenyl-6-methoxy-1,4-benzoquinol (DDMQH2) to 2-polyprenyl-3-methyl-6-methoxy-1,4-benzoquinol (DMQH2). The polypeptide is Ubiquinone/menaquinone biosynthesis C-methyltransferase UbiE (Francisella tularensis subsp. tularensis (strain FSC 198)).